A 705-amino-acid polypeptide reads, in one-letter code: Translation factor GUF1 homolog, mitochondrial (705 aa).

A mitochondrion-targeting transit peptide spans 1–20; it reads MVCHRYLLGLGASTLCLRRL. Positions 72-92 are disordered; that stretch reads PVEDNGTTNLTGTGEATSETG. Polar residues predominate over residues 76–90; the sequence is NGTTNLTGTGEATSE. In terms of domain architecture, tr-type G spans 105–288; the sequence is NRMRNFCIIA…AVVERIPPPK (184 aa). Residues 114–121, 181–185, and 235–238 each bind GTP; these read AHVDHGKS, DTPGH, and NKID.

Belongs to the TRAFAC class translation factor GTPase superfamily. Classic translation factor GTPase family. LepA subfamily.

Its subcellular location is the mitochondrion inner membrane. It carries out the reaction GTP + H2O = GDP + phosphate + H(+). Its function is as follows. Promotes mitochondrial protein synthesis. May act as a fidelity factor of the translation reaction, by catalyzing a one-codon backward translocation of tRNAs on improperly translocated ribosomes. Binds to mitochondrial ribosomes in a GTP-dependent manner. This Babesia bovis protein is Translation factor GUF1 homolog, mitochondrial.